A 1006-amino-acid polypeptide reads, in one-letter code: Multiple C2 domain and transmembrane region protein 9 (1006 aa).

Residues 1 to 108 enclose the C2 1 domain; the sequence is MSNIKLGVEV…PRSEAAPFNY (108 aa). Residues 135–156 are disordered; the sequence is VTPSVPTPVPESPQAYSPSPRK. 3 consecutive C2 domains span residues 251-371, 411-536, and 579-704; these read RGTE…PQWY, SDSS…DRWV, and NSSD…THAY. Asp284, Asp290, Asp337, Asp339, and Asp344 together coordinate Ca(2+). 2 helical membrane-spanning segments follow: residues 842–862 and 946–966; these read MLVT…AVIG and ATAI…ITPF.

This sequence belongs to the MCTP family. It depends on Ca(2+) as a cofactor. In terms of tissue distribution, expressed in incipient leaf primordia and roots meristems. Observed in flowers.

Its subcellular location is the cell membrane. The protein localises to the cytoplasm. In terms of biological role, may function as a signaling molecule by regulating the trafficking of other regulators. The protein is Multiple C2 domain and transmembrane region protein 9 of Arabidopsis thaliana (Mouse-ear cress).